Here is a 224-residue protein sequence, read N- to C-terminus: PKHD-type hydroxylase Shewmr7_0698 (224 aa).

The 99-residue stretch at 78-176 (QFYPPLFNRY…RTAAFMWLQS (99 aa)) folds into the Fe2OG dioxygenase domain. Fe cation is bound by residues H96, D98, and H157. R167 provides a ligand contact to 2-oxoglutarate.

Requires Fe(2+) as cofactor. L-ascorbate serves as cofactor.

This is PKHD-type hydroxylase Shewmr7_0698 from Shewanella sp. (strain MR-7).